Reading from the N-terminus, the 86-residue chain is MAATSLTAPPSFSGLRASRAVVAMAGTGKGGAFTGEISVEQLKDIGRWVILGHSERIVVAYEPVWAIGTGKVATPDQAQEVHGLCR.

The active-site Proton acceptor is Glu-62.

This sequence belongs to the triosephosphate isomerase family. As to quaternary structure, homodimer.

It carries out the reaction D-glyceraldehyde 3-phosphate = dihydroxyacetone phosphate. It participates in carbohydrate biosynthesis; gluconeogenesis. Its pathway is carbohydrate degradation; glycolysis; D-glyceraldehyde 3-phosphate from glycerone phosphate: step 1/1. This is Triosephosphate isomerase from Platanus orientalis (Oriental plane-tree).